The following is an 808-amino-acid chain: Probable inorganic carbon transporter subunit DabA (808 aa).

The Zn(2+) site is built by C334, D336, H494, and C509.

It belongs to the inorganic carbon transporter (TC 9.A.2) DabA family. As to quaternary structure, forms a complex with DabB. Zn(2+) serves as cofactor.

It localises to the cell inner membrane. Part of an energy-coupled inorganic carbon pump. This is Probable inorganic carbon transporter subunit DabA from Rhodopseudomonas palustris (strain BisB5).